Reading from the N-terminus, the 253-residue chain is Ribonuclease PH (253 aa).

Phosphate-binding positions include R86 and 124–126 (GTR).

This sequence belongs to the RNase PH family. In terms of assembly, homohexameric ring arranged as a trimer of dimers.

It catalyses the reaction tRNA(n+1) + phosphate = tRNA(n) + a ribonucleoside 5'-diphosphate. In terms of biological role, phosphorolytic 3'-5' exoribonuclease that plays an important role in tRNA 3'-end maturation. Removes nucleotide residues following the 3'-CCA terminus of tRNAs; can also add nucleotides to the ends of RNA molecules by using nucleoside diphosphates as substrates, but this may not be physiologically important. Probably plays a role in initiation of 16S rRNA degradation (leading to ribosome degradation) during starvation. The polypeptide is Ribonuclease PH (Brevibacillus brevis (strain 47 / JCM 6285 / NBRC 100599)).